An 88-amino-acid polypeptide reads, in one-letter code: Small ribosomal subunit protein bS20 (88 aa).

The tract at residues 1-23 (MANSPQAKKRARQNDKARAHNAS) is disordered.

This sequence belongs to the bacterial ribosomal protein bS20 family.

Binds directly to 16S ribosomal RNA. This is Small ribosomal subunit protein bS20 from Teredinibacter turnerae (strain ATCC 39867 / T7901).